Here is a 590-residue protein sequence, read N- to C-terminus: DNA primase (590 aa).

The segment at 37 to 61 adopts a CHC2-type zinc-finger fold; that stretch reads CPFHTEKTPSFIVNPAGAHYHCFGC. A Toprim domain is found at 253-333; that stretch reads KKVILVEGQA…QMSVFVCKLP (81 aa). Mg(2+) is bound by residues Glu259, Asp304, and Asp306.

Belongs to the DnaG primase family. In terms of assembly, monomer. Interacts with DnaB. Zn(2+) is required as a cofactor. Mg(2+) serves as cofactor.

The enzyme catalyses ssDNA + n NTP = ssDNA/pppN(pN)n-1 hybrid + (n-1) diphosphate.. Its function is as follows. RNA polymerase that catalyzes the synthesis of short RNA molecules used as primers for DNA polymerase during DNA replication. The chain is DNA primase from Chlamydia pneumoniae (Chlamydophila pneumoniae).